A 684-amino-acid polypeptide reads, in one-letter code: Chaperone protein HtpG (684 aa).

Residues 1–329 (MSKKGTIGVT…SPDIPLNVSR (329 aa)) form an a; substrate-binding region. Residues 330–548 (SYLQSDANVK…FMRRMRDMAQ (219 aa)) form a b region. The tract at residues 549 to 684 (LQPGMSFYGE…EFIRRSQRLL (136 aa)) is c.

The protein belongs to the heat shock protein 90 family. In terms of assembly, homodimer.

The protein localises to the cytoplasm. Its function is as follows. Molecular chaperone. Has ATPase activity. The sequence is that of Chaperone protein HtpG from Porphyromonas gingivalis (strain ATCC BAA-308 / W83).